The primary structure comprises 147 residues: Hemoglobin subunit beta (147 aa).

Residues 3-147 (HWTAEEKQLI…VAHALARKYH (145 aa)) form the Globin domain. Residues H64 and H93 each contribute to the heme b site.

This sequence belongs to the globin family. Heterotetramer of 2 alpha (or alpha-D) and 2 beta chains. As to expression, red blood cells.

Functionally, involved in oxygen transport from the lung to the various peripheral tissues. The beta chain is a component of adult hemoglobin A and D. The sequence is that of Hemoglobin subunit beta (HBB) from Gallus gallus (Chicken).